The primary structure comprises 149 residues: Ribonuclease H (149 aa).

The RNase H type-1 domain occupies 1–143 (MNAVEIYTDG…ADMLANRGVE (143 aa)). Mg(2+) is bound by residues Asp-9, Glu-47, Asp-69, and Asp-135.

It belongs to the RNase H family. In terms of assembly, monomer. Mg(2+) serves as cofactor.

It is found in the cytoplasm. The catalysed reaction is Endonucleolytic cleavage to 5'-phosphomonoester.. Functionally, endonuclease that specifically degrades the RNA of RNA-DNA hybrids. In Albidiferax ferrireducens (strain ATCC BAA-621 / DSM 15236 / T118) (Rhodoferax ferrireducens), this protein is Ribonuclease H.